Reading from the N-terminus, the 170-residue chain is Crossover junction endodeoxyribonuclease RuvC (170 aa).

Residues aspartate 9, glutamate 70, and aspartate 145 contribute to the active site. 3 residues coordinate Mg(2+): aspartate 9, glutamate 70, and aspartate 145.

Belongs to the RuvC family. Homodimer which binds Holliday junction (HJ) DNA. The HJ becomes 2-fold symmetrical on binding to RuvC with unstacked arms; it has a different conformation from HJ DNA in complex with RuvA. In the full resolvosome a probable DNA-RuvA(4)-RuvB(12)-RuvC(2) complex forms which resolves the HJ. Mg(2+) is required as a cofactor.

It localises to the cytoplasm. It catalyses the reaction Endonucleolytic cleavage at a junction such as a reciprocal single-stranded crossover between two homologous DNA duplexes (Holliday junction).. Its function is as follows. The RuvA-RuvB-RuvC complex processes Holliday junction (HJ) DNA during genetic recombination and DNA repair. Endonuclease that resolves HJ intermediates. Cleaves cruciform DNA by making single-stranded nicks across the HJ at symmetrical positions within the homologous arms, yielding a 5'-phosphate and a 3'-hydroxyl group; requires a central core of homology in the junction. The consensus cleavage sequence is 5'-(A/T)TT(C/G)-3'. Cleavage occurs on the 3'-side of the TT dinucleotide at the point of strand exchange. HJ branch migration catalyzed by RuvA-RuvB allows RuvC to scan DNA until it finds its consensus sequence, where it cleaves and resolves the cruciform DNA. This chain is Crossover junction endodeoxyribonuclease RuvC, found in Chlamydia trachomatis serovar A (strain ATCC VR-571B / DSM 19440 / HAR-13).